A 29-amino-acid polypeptide reads, in one-letter code: Cyclotide mden-F (29 aa).

The segment at residues 1 to 29 (GLPICGETCFFGKCNTPKCTCINPICYKN) is a cross-link (cyclopeptide (Gly-Asn)). 3 disulfides stabilise this stretch: Cys-5–Cys-19, Cys-9–Cys-21, and Cys-14–Cys-26.

It belongs to the cyclotide family. This is a cyclic peptide.

Its function is as follows. Probably participates in a plant defense mechanism. The chain is Cyclotide mden-F from Melicytus dentatus (Tree violet).